The primary structure comprises 304 residues: Non-specific ribonucleoside hydrolase RihC (304 aa).

The active site involves H233.

It belongs to the IUNH family. RihC subfamily.

Functionally, hydrolyzes both purine and pyrimidine ribonucleosides with a broad-substrate specificity. This is Non-specific ribonucleoside hydrolase RihC from Shigella boydii serotype 4 (strain Sb227).